A 372-amino-acid polypeptide reads, in one-letter code: Dual-specificity RNA methyltransferase RlmN (372 aa).

Glutamate 97 acts as the Proton acceptor in catalysis. The Radical SAM core domain occupies 103–340 (ETDRKTLCVS…AVVRKNRGTD (238 aa)). Cysteine 110 and cysteine 345 are joined by a disulfide. [4Fe-4S] cluster-binding residues include cysteine 117, cysteine 121, and cysteine 124. S-adenosyl-L-methionine-binding positions include 172–173 (GE), serine 204, 226–228 (SLN), and asparagine 302. Cysteine 345 functions as the S-methylcysteine intermediate in the catalytic mechanism. The segment at 350–372 (AEGGPGDPRRRAAAALTGTPAAG) is disordered. Positions 362-372 (AAALTGTPAAG) are enriched in low complexity.

The protein belongs to the radical SAM superfamily. RlmN family. It depends on [4Fe-4S] cluster as a cofactor.

It localises to the cytoplasm. The catalysed reaction is adenosine(2503) in 23S rRNA + 2 reduced [2Fe-2S]-[ferredoxin] + 2 S-adenosyl-L-methionine = 2-methyladenosine(2503) in 23S rRNA + 5'-deoxyadenosine + L-methionine + 2 oxidized [2Fe-2S]-[ferredoxin] + S-adenosyl-L-homocysteine. It carries out the reaction adenosine(37) in tRNA + 2 reduced [2Fe-2S]-[ferredoxin] + 2 S-adenosyl-L-methionine = 2-methyladenosine(37) in tRNA + 5'-deoxyadenosine + L-methionine + 2 oxidized [2Fe-2S]-[ferredoxin] + S-adenosyl-L-homocysteine. In terms of biological role, specifically methylates position 2 of adenine 2503 in 23S rRNA and position 2 of adenine 37 in tRNAs. m2A2503 modification seems to play a crucial role in the proofreading step occurring at the peptidyl transferase center and thus would serve to optimize ribosomal fidelity. The chain is Dual-specificity RNA methyltransferase RlmN from Anaeromyxobacter dehalogenans (strain 2CP-C).